The chain runs to 322 residues: Acetyl-coenzyme A carboxylase carboxyl transferase subunit alpha (322 aa).

A CoA carboxyltransferase C-terminal domain is found at 39-296 (DLTALKKQLI…HSKLVTELNY (258 aa)).

This sequence belongs to the AccA family. In terms of assembly, acetyl-CoA carboxylase is a heterohexamer composed of biotin carboxyl carrier protein (accB), biotin carboxylase (accC) and two subunits each of ACCase subunit alpha (accA) and ACCase subunit beta (accD).

It is found in the plastid. It localises to the chloroplast. The catalysed reaction is N(6)-carboxybiotinyl-L-lysyl-[protein] + acetyl-CoA = N(6)-biotinyl-L-lysyl-[protein] + malonyl-CoA. Its pathway is lipid metabolism; malonyl-CoA biosynthesis; malonyl-CoA from acetyl-CoA: step 1/1. In terms of biological role, component of the acetyl coenzyme A carboxylase (ACC) complex. First, biotin carboxylase catalyzes the carboxylation of biotin on its carrier protein (BCCP) and then the CO(2) group is transferred by the carboxyltransferase to acetyl-CoA to form malonyl-CoA. In Antithamnion sp. (Red alga), this protein is Acetyl-coenzyme A carboxylase carboxyl transferase subunit alpha.